We begin with the raw amino-acid sequence, 119 residues long: Small ribosomal subunit protein uS17 (119 aa).

Positions 1–21 (MAEAKTGAKATKSAAAGAADG) are enriched in low complexity. A disordered region spans residues 1 to 44 (MAEAKTGAKATKSAAAGAADGASKEKGPKHTPSTPKPRGRRKTR).

The protein belongs to the universal ribosomal protein uS17 family. In terms of assembly, part of the 30S ribosomal subunit.

Its function is as follows. One of the primary rRNA binding proteins, it binds specifically to the 5'-end of 16S ribosomal RNA. In Mycobacterium marinum (strain ATCC BAA-535 / M), this protein is Small ribosomal subunit protein uS17.